An 861-amino-acid polypeptide reads, in one-letter code: Bifunctional uridylyltransferase/uridylyl-removing enzyme (861 aa).

The tract at residues 1 to 322 is uridylyltransferase; that stretch reads MHTAAAATPA…FPTELGITRT (322 aa). The uridylyl-removing stretch occupies residues 323-679; the sequence is INGRFVERQG…ARISPVGEGL (357 aa). Positions 441 to 557 constitute an HD domain; sequence VDQHILMVVR…RHFADQVGSE (117 aa). ACT domains are found at residues 680–763 and 792–861; these read QVAV…AEPP and LLSL…ALAI.

The protein belongs to the GlnD family. Mg(2+) serves as cofactor.

The enzyme catalyses [protein-PII]-L-tyrosine + UTP = [protein-PII]-uridylyl-L-tyrosine + diphosphate. It catalyses the reaction [protein-PII]-uridylyl-L-tyrosine + H2O = [protein-PII]-L-tyrosine + UMP + H(+). Its activity is regulated as follows. Uridylyltransferase (UTase) activity is inhibited by glutamine, while glutamine activates uridylyl-removing (UR) activity. In terms of biological role, modifies, by uridylylation and deuridylylation, the PII regulatory proteins (GlnB and homologs), in response to the nitrogen status of the cell that GlnD senses through the glutamine level. Under low glutamine levels, catalyzes the conversion of the PII proteins and UTP to PII-UMP and PPi, while under higher glutamine levels, GlnD hydrolyzes PII-UMP to PII and UMP (deuridylylation). Thus, controls uridylylation state and activity of the PII proteins, and plays an important role in the regulation of nitrogen assimilation and metabolism. This Ralstonia nicotianae (strain ATCC BAA-1114 / GMI1000) (Ralstonia solanacearum) protein is Bifunctional uridylyltransferase/uridylyl-removing enzyme.